The sequence spans 473 residues: Dol-P-Glc:Glc(2)Man(9)GlcNAc(2)-PP-Dol alpha-1,2-glucosyltransferase (473 aa).

Over 1–6 the chain is Cytoplasmic; sequence MAQLEG. Residues 7-27 traverse the membrane as a helical segment; the sequence is YCFSAALSCTFLVSCLLFSAF. Residues 28–64 are Extracellular-facing; sequence SRALREPYMDEIFHLPQAQRYCEGHFSLSQWDPMITT. The helical transmembrane segment at 65-85 threads the bilayer; the sequence is LPGLYLVSVGVVKPAIWIFAW. At 86 to 97 the chain is on the cytoplasmic side; sequence SEHVVCSIGMLR. A helical membrane pass occupies residues 98–118; sequence FVNLLFSVGNFYLLYLLFHKV. The Extracellular portion of the chain corresponds to 119-126; sequence QPRNKAAS. Residues 127-147 form a helical membrane-spanning segment; it reads SIQRVLSTLTLAVFPTLYFFN. The Cytoplasmic portion of the chain corresponds to 148–150; sequence FLY. Residues 151-171 form a helical membrane-spanning segment; it reads YTEAGSMFFTLFAYLMCLYGN. Over 172 to 175 the chain is Extracellular; that stretch reads HKTS. Residues 176 to 196 traverse the membrane as a helical segment; the sequence is AFLGFCGFMFRQTNIIWAVFC. At 197 to 256 the chain is on the cytoplasmic side; sequence AGNVIAQKLTEAWKTELQKKEDRLPPIKGPFAEFRKILQFLLAYSMSFKNLSMLFCLTWP. Residues 257–277 form a helical membrane-spanning segment; it reads YILLGFLFCAFVVVNGGIVIG. Residues 278–283 are Extracellular-facing; it reads DRSSHE. The helical transmembrane segment at 284–304 threads the bilayer; that stretch reads ACLHFPQLFYFFSFTLFFSFP. Residues 305–317 are Cytoplasmic-facing; it reads HLLSPSKIKTFLS. Residues 318 to 338 form a helical membrane-spanning segment; it reads LVWKHGILFLVVTLVSVFLVW. Residues 339-365 lie on the Extracellular side of the membrane; the sequence is KFTYAHKYLLADNRHYTFYVWKRVFQR. A helical membrane pass occupies residues 366 to 386; it reads YAILKYLLVPAYIFAGWSIAD. The Cytoplasmic segment spans residues 387 to 392; sequence SLKSKP. Residues 393–413 form a helical membrane-spanning segment; the sequence is IFWNLMFFICLFIVIVPQKLL. At 414 to 436 the chain is on the extracellular side; the sequence is EFRYFILPYVIYRLNITLPPTSR. The helical transmembrane segment at 437–457 threads the bilayer; it reads LVCELSCYAIVNFITFYIFLN. The Cytoplasmic portion of the chain corresponds to 458–473; that stretch reads KTFQWPNSQDIQRFMW.

It belongs to the ALG10 glucosyltransferase family. In terms of assembly, interacts with KCNH1; may regulate KCNH1, possibly by regulating its N-glycosylation. Interacts with KCNH2; may reduce KCNH2 sensitivity to classic proarrhythmic drug blockade, possibly by regulating its N-glycosylation. As to expression, highly expressed in heart, placenta, liver, kidney and pancreas. Weakly expressed in lung, skeletal muscle and brain.

Its subcellular location is the endoplasmic reticulum membrane. It carries out the reaction an alpha-D-Glc-(1-&gt;3)-alpha-D-Glc-(1-&gt;3)-alpha-D-Man-(1-&gt;2)-alpha-D-Man-(1-&gt;2)-alpha-D-Man-(1-&gt;3)-[alpha-D-Man-(1-&gt;2)-alpha-D-Man-(1-&gt;3)-[alpha-D-Man-(1-&gt;2)-alpha-D-Man-(1-&gt;6)]-alpha-D-Man-(1-&gt;6)]-beta-D-Man-(1-&gt;4)-beta-D-GlcNAc-(1-&gt;4)-alpha-D-GlcNAc-diphospho-di-trans,poly-cis-dolichol + a di-trans,poly-cis-dolichyl beta-D-glucosyl phosphate = a alpha-D-Glc-(1-&gt;2)-alpha-D-Glc-(1-&gt;3)-alpha-D-Glc-(1-&gt;3)-alpha-D-Man-(1-&gt;2)-alpha-D-Man-(1-&gt;2)-alpha-D-Man-(1-&gt;3)-[alpha-D-Man-(1-&gt;2)-alpha-D-Man-(1-&gt;3)-[alpha-D-Man-(1-&gt;2)-alpha-D-Man-(1-&gt;6)]-alpha-D-Man-(1-&gt;6)]-beta-D-Man-(1-&gt;4)-beta-D-GlcNAc-(1-&gt;4)-alpha-D-GlcNAc-diphospho-di-trans,poly-cis-dolichol + a di-trans,poly-cis-dolichyl phosphate + H(+). It functions in the pathway protein modification; protein glycosylation. Functionally, dol-P-Glc:Glc(2)Man(9)GlcNAc(2)-PP-Dol alpha-1,2-glucosyltransferase that operates in the biosynthetic pathway of dolichol-linked oligosaccharides, the glycan precursors employed in protein asparagine (N)-glycosylation. The assembly of dolichol-linked oligosaccharides begins on the cytosolic side of the endoplasmic reticulum membrane and finishes in its lumen. The sequential addition of sugars to dolichol pyrophosphate produces dolichol-linked oligosaccharides containing fourteen sugars, including two GlcNAcs, nine mannoses and three glucoses. Once assembled, the oligosaccharide is transferred from the lipid to nascent proteins by oligosaccharyltransferases. In the lumen of the endoplasmic reticulum, adds the third and last glucose residue from dolichyl phosphate glucose (Dol-P-Glc) onto the lipid-linked oligosaccharide intermediate Glc(2)Man(9)GlcNAc(2)-PP-Dol to produce Glc(3)Man(9)GlcNAc(2)-PP-Dol. In Homo sapiens (Human), this protein is Dol-P-Glc:Glc(2)Man(9)GlcNAc(2)-PP-Dol alpha-1,2-glucosyltransferase.